A 253-amino-acid polypeptide reads, in one-letter code: Shikimate dehydrogenase (NADP(+)) (253 aa).

Residues 13-15 (SIS) and Thr59 contribute to the shikimate site. Lys63 functions as the Proton acceptor in the catalytic mechanism. Residue Glu74 participates in NADP(+) binding. Residues Asn83 and Asp94 each coordinate shikimate. NADP(+) is bound by residues 115 to 119 (GAGGA), 139 to 144 (NRTIER), and Val199. A shikimate-binding site is contributed by Tyr201. An NADP(+)-binding site is contributed by Gly221.

The protein belongs to the shikimate dehydrogenase family. Homodimer.

It carries out the reaction shikimate + NADP(+) = 3-dehydroshikimate + NADPH + H(+). It functions in the pathway metabolic intermediate biosynthesis; chorismate biosynthesis; chorismate from D-erythrose 4-phosphate and phosphoenolpyruvate: step 4/7. Its function is as follows. Involved in the biosynthesis of the chorismate, which leads to the biosynthesis of aromatic amino acids. Catalyzes the reversible NADPH linked reduction of 3-dehydroshikimate (DHSA) to yield shikimate (SA). The protein is Shikimate dehydrogenase (NADP(+)) of Thermotoga maritima (strain ATCC 43589 / DSM 3109 / JCM 10099 / NBRC 100826 / MSB8).